We begin with the raw amino-acid sequence, 251 residues long: MPSRWPGVAGPPALARTEGGEGSAGHSYPQNSKGTGEQHKADRIKEGHRVYAHIAKLQELWKTTQIQTIHIPKSMTDASFLKHPELTLGQKRYLCSVAKICNSSYLRTLMKRQYMHIFHHGSQKTGVLTHHRGHMSSRYSQKQHSPCTAWRHHLEREDSLSIAAGAPEMIIHSLWRPLRHKEGLKIGYASKTRCKSLKIFRRPGRLFLLPVPSNDSQSCPSEETQEEDLLNKCMQSMSIQEQGPAHASLTV.

The interval 1–41 is disordered; that stretch reads MPSRWPGVAGPPALARTEGGEGSAGHSYPQNSKGTGEQHKA.

Belongs to the FAM216 family.

This Mus musculus (Mouse) protein is Protein FAM216A (Fam216a).